We begin with the raw amino-acid sequence, 331 residues long: Glycerol-3-phosphate dehydrogenase [NAD(P)+] (331 aa).

3 residues coordinate NADPH: W11, R30, and K105. Sn-glycerol 3-phosphate contacts are provided by K105, G134, and S136. A138 contributes to the NADPH binding site. K189, D242, S252, R253, and N254 together coordinate sn-glycerol 3-phosphate. Residue K189 is the Proton acceptor of the active site. R253 contributes to the NADPH binding site. 2 residues coordinate NADPH: V277 and E279.

The protein belongs to the NAD-dependent glycerol-3-phosphate dehydrogenase family.

It localises to the cytoplasm. The catalysed reaction is sn-glycerol 3-phosphate + NAD(+) = dihydroxyacetone phosphate + NADH + H(+). The enzyme catalyses sn-glycerol 3-phosphate + NADP(+) = dihydroxyacetone phosphate + NADPH + H(+). It functions in the pathway membrane lipid metabolism; glycerophospholipid metabolism. In terms of biological role, catalyzes the reduction of the glycolytic intermediate dihydroxyacetone phosphate (DHAP) to sn-glycerol 3-phosphate (G3P), the key precursor for phospholipid synthesis. In Janthinobacterium sp. (strain Marseille) (Minibacterium massiliensis), this protein is Glycerol-3-phosphate dehydrogenase [NAD(P)+].